The following is a 137-amino-acid chain: NADH dehydrogenase [ubiquinone] 1 beta subcomplex subunit 7 (137 aa).

Glycine 2 carries the N-myristoyl glycine lipid modification. A CHCH domain is found at arginine 56 to arginine 98. Positions cysteine 59–cysteine 69 match the Cx9C motif 1 motif. Disulfide bonds link cysteine 59/cysteine 90 and cysteine 69/cysteine 80. The residue at position 73 (serine 73) is a Phosphoserine. The short motif at cysteine 80–cysteine 90 is the Cx9C motif 2 element. Positions lysine 113–leucine 137 are disordered.

Belongs to the complex I NDUFB7 subunit family. Complex I is composed of 45 different subunits.

It localises to the mitochondrion inner membrane. The protein localises to the mitochondrion intermembrane space. Accessory subunit of the mitochondrial membrane respiratory chain NADH dehydrogenase (Complex I), that is believed not to be involved in catalysis. Complex I functions in the transfer of electrons from NADH to the respiratory chain. The immediate electron acceptor for the enzyme is believed to be ubiquinone. This Pan troglodytes (Chimpanzee) protein is NADH dehydrogenase [ubiquinone] 1 beta subcomplex subunit 7 (NDUFB7).